The chain runs to 600 residues: Aspartate--tRNA(Asp/Asn) ligase (600 aa).

L-aspartate is bound at residue glutamate 175. The tract at residues 199-202 is aspartate; it reads QLFK. An L-aspartate-binding site is contributed by arginine 221. ATP contacts are provided by residues 221–223 and glutamine 230; that span reads RDE. Histidine 453 contacts L-aspartate. Glutamate 487 contributes to the ATP binding site. Arginine 494 contacts L-aspartate. Position 539–542 (539–542) interacts with ATP; that stretch reads GWDR. The tract at residues 578–600 is disordered; the sequence is AAQRKESGIDFKPKKGPQGQKEK. Positions 580-590 are enriched in basic and acidic residues; sequence QRKESGIDFKP.

The protein belongs to the class-II aminoacyl-tRNA synthetase family. Type 1 subfamily. In terms of assembly, homodimer.

The protein resides in the cytoplasm. The enzyme catalyses tRNA(Asx) + L-aspartate + ATP = L-aspartyl-tRNA(Asx) + AMP + diphosphate. Aspartyl-tRNA synthetase with relaxed tRNA specificity since it is able to aspartylate not only its cognate tRNA(Asp) but also tRNA(Asn). Reaction proceeds in two steps: L-aspartate is first activated by ATP to form Asp-AMP and then transferred to the acceptor end of tRNA(Asp/Asn). This chain is Aspartate--tRNA(Asp/Asn) ligase, found in Corynebacterium jeikeium (strain K411).